The sequence spans 395 residues: Putative pyridoxal phosphate-dependent acyltransferase (395 aa).

Residue 110–111 (GF) coordinates pyridoxal 5'-phosphate. Histidine 135 is a substrate binding site. Pyridoxal 5'-phosphate-binding positions include serine 185, 210–213 (DDAH), and 240–243 (TLSK). N6-(pyridoxal phosphate)lysine is present on lysine 243. Threonine 357 serves as a coordination point for substrate.

Belongs to the class-II pyridoxal-phosphate-dependent aminotransferase family. As to quaternary structure, homodimer. It depends on pyridoxal 5'-phosphate as a cofactor.

The polypeptide is Putative pyridoxal phosphate-dependent acyltransferase (Staphylococcus aureus (strain MRSA252)).